We begin with the raw amino-acid sequence, 283 residues long: uncharacterized protein (283 aa).

The N-linked (GlcNAc...) asparagine glycan is linked to asparagine 15. Positions 15–81 constitute a PQ-loop 1 domain; it reads NATASTVFAI…QELNIALKVQ (67 aa). The next 6 helical transmembrane spans lie at 19–39, 48–68, 108–128, 138–158, 170–190, and 206–226; these read STVF…PQII, EGLD…LSVY, ALFV…MLIL, VEWP…IGFL, VTGI…FSFL, and GLLF…NVLL. The PQ-loop 2 domain occupies 149–204; that stretch reads ATVLVNIGFLPQYISIFRARAVTGISYLFLAIDSSGSLFSFLSLPFDRWDVLAAVD. N-linked (GlcNAc...) asparagine glycosylation is present at asparagine 228.

Its subcellular location is the membrane. This is an uncharacterized protein from Schizosaccharomyces pombe (strain 972 / ATCC 24843) (Fission yeast).